The chain runs to 66 residues: Large ribosomal subunit protein bL32 (66 aa).

Residues M1–Q19 are compositionally biased toward basic residues. Residues M1–W20 are disordered.

Belongs to the bacterial ribosomal protein bL32 family.

This Beutenbergia cavernae (strain ATCC BAA-8 / DSM 12333 / CCUG 43141 / JCM 11478 / NBRC 16432 / NCIMB 13614 / HKI 0122) protein is Large ribosomal subunit protein bL32.